The primary structure comprises 782 residues: Endonuclease MutS2 (782 aa).

336-343 (GPNTGGKT) serves as a coordination point for ATP. In terms of domain architecture, Smr spans 707–782 (LDLRGYRYED…GFGVTVATLK (76 aa)).

Belongs to the DNA mismatch repair MutS family. MutS2 subfamily. In terms of assembly, homodimer. Binds to stalled ribosomes, contacting rRNA.

Its function is as follows. Endonuclease that is involved in the suppression of homologous recombination and thus may have a key role in the control of bacterial genetic diversity. Acts as a ribosome collision sensor, splitting the ribosome into its 2 subunits. Detects stalled/collided 70S ribosomes which it binds and splits by an ATP-hydrolysis driven conformational change. Acts upstream of the ribosome quality control system (RQC), a ribosome-associated complex that mediates the extraction of incompletely synthesized nascent chains from stalled ribosomes and their subsequent degradation. Probably generates substrates for RQC. The sequence is that of Endonuclease MutS2 from Staphylococcus aureus (strain MSSA476).